The primary structure comprises 216 residues: Ribonuclease HII (216 aa).

In terms of domain architecture, RNase H type-2 spans 33–216; the sequence is WPVAGADEAG…RMSFRPFRQV (184 aa). Residues Asp-39, Glu-40, and Asp-130 each contribute to the a divalent metal cation site.

This sequence belongs to the RNase HII family. Mn(2+) is required as a cofactor. Requires Mg(2+) as cofactor.

The protein localises to the cytoplasm. It catalyses the reaction Endonucleolytic cleavage to 5'-phosphomonoester.. Functionally, endonuclease that specifically degrades the RNA of RNA-DNA hybrids. This Rhizobium meliloti (strain 1021) (Ensifer meliloti) protein is Ribonuclease HII.